We begin with the raw amino-acid sequence, 152 residues long: Protein-export protein SecB (152 aa).

The protein belongs to the SecB family. Homotetramer, a dimer of dimers. One homotetramer interacts with 1 SecA dimer.

It localises to the cytoplasm. In terms of biological role, one of the proteins required for the normal export of preproteins out of the cell cytoplasm. It is a molecular chaperone that binds to a subset of precursor proteins, maintaining them in a translocation-competent state. It also specifically binds to its receptor SecA. The chain is Protein-export protein SecB from Acinetobacter baumannii (strain AB307-0294).